The sequence spans 298 residues: Tyrosine recombinase XerC (298 aa).

One can recognise a Core-binding (CB) domain in the interval 1–84; the sequence is MNHIQDAFLN…TLRTFYEYWM (84 aa). Residues 105-286 form the Tyr recombinase domain; it reads YLPQFFYEEE…SNQQLRKVYL (182 aa). Active-site residues include Arg-145, Lys-169, His-238, Arg-241, and His-264. The active-site O-(3'-phospho-DNA)-tyrosine intermediate is Tyr-273.

This sequence belongs to the 'phage' integrase family. XerC subfamily. As to quaternary structure, forms a cyclic heterotetrameric complex composed of two molecules of XerC and two molecules of XerD.

The protein resides in the cytoplasm. Site-specific tyrosine recombinase, which acts by catalyzing the cutting and rejoining of the recombining DNA molecules. The XerC-XerD complex is essential to convert dimers of the bacterial chromosome into monomers to permit their segregation at cell division. It also contributes to the segregational stability of plasmids. This is Tyrosine recombinase XerC from Staphylococcus aureus (strain USA300).